The chain runs to 255 residues: Glutamate racemase (255 aa).

Residues 7–8 and 39–40 contribute to the substrate site; these read DS and YG. Residue C70 is the Proton donor/acceptor of the active site. Position 71–72 (71–72) interacts with substrate; the sequence is NT. Catalysis depends on C181, which acts as the Proton donor/acceptor. Position 182 to 183 (182 to 183) interacts with substrate; sequence TH.

This sequence belongs to the aspartate/glutamate racemases family.

The catalysed reaction is L-glutamate = D-glutamate. It participates in cell wall biogenesis; peptidoglycan biosynthesis. Functionally, provides the (R)-glutamate required for cell wall biosynthesis. The polypeptide is Glutamate racemase (Helicobacter acinonychis (strain Sheeba)).